The sequence spans 576 residues: Chaperonin CPN60-2, mitochondrial (576 aa).

The transit peptide at 1–34 (MYRAAASLASKARQAGSSSAARQVGSRLAWSRNY) directs the protein to the mitochondrion.

It belongs to the chaperonin (HSP60) family.

It localises to the mitochondrion. Implicated in mitochondrial protein import and macromolecular assembly. May facilitate the correct folding of imported proteins. May also prevent misfolding and promote the refolding and proper assembly of unfolded polypeptides generated under stress conditions in the mitochondrial matrix. The sequence is that of Chaperonin CPN60-2, mitochondrial (CPN60II) from Zea mays (Maize).